We begin with the raw amino-acid sequence, 211 residues long: Ras-related protein RABB1c (211 aa).

Serine 2 is modified (N-acetylserine). 13-21 (GDTGVGKSC) serves as a coordination point for GTP. Positions 35 to 43 (HDLTIGVEF) match the Effector region motif. GTP-binding positions include 61–65 (DTAGQ), 119–122 (NKCD), and 149–151 (SAK). Residues cysteine 209 and cysteine 210 are each lipidated (S-geranylgeranyl cysteine).

It belongs to the small GTPase superfamily. Rab family.

The protein localises to the cell membrane. Its function is as follows. Intracellular vesicle trafficking and protein transport. The polypeptide is Ras-related protein RABB1c (RABB1C) (Arabidopsis thaliana (Mouse-ear cress)).